Consider the following 151-residue polypeptide: Lectin-like protein BA14k (151 aa).

The N-terminal stretch at 1–26 (MNIFKQTCVGAFAVIFGATSIAPTMA) is a signal peptide. The chain crosses the membrane as a helical span at residues 83–103 (GWWYPLAAFGAGAIIGGAVSQ).

The protein belongs to the BA14k family.

Its subcellular location is the cell membrane. In terms of biological role, has immunoglobulin-binding and hemagglutination properties, and can bind to mannose. Essential for virulence. May be involved in LPS biosynthesis or polysaccharide transport. The chain is Lectin-like protein BA14k from Brucella anthropi (strain ATCC 49188 / DSM 6882 / CCUG 24695 / JCM 21032 / LMG 3331 / NBRC 15819 / NCTC 12168 / Alc 37) (Ochrobactrum anthropi).